Reading from the N-terminus, the 201-residue chain is Recombination protein RecR (201 aa).

The segment at 57–72 (CADCRTFTEQEVCNIC) adopts a C4-type zinc-finger fold. The Toprim domain maps to 81–176 (GQICVVESPA…DASRIAHGVP (96 aa)).

This sequence belongs to the RecR family.

Its function is as follows. May play a role in DNA repair. It seems to be involved in an RecBC-independent recombinational process of DNA repair. It may act with RecF and RecO. In Klebsiella pneumoniae subsp. pneumoniae (strain ATCC 700721 / MGH 78578), this protein is Recombination protein RecR.